The primary structure comprises 411 residues: S-adenosylmethionine synthase (411 aa).

His-15 is a binding site for ATP. Asp-17 lines the Mg(2+) pocket. Glu-43 serves as a coordination point for K(+). Residues Glu-56 and Gln-99 each coordinate L-methionine. Positions 99-109 (QSQEIAQGVDT) are flexible loop. Residues 179–181 (DGK), Asp-260, 266–267 (RK), Ala-283, and Lys-287 contribute to the ATP site. Asp-260 provides a ligand contact to L-methionine. Residue Lys-291 participates in L-methionine binding.

Belongs to the AdoMet synthase family. Homotetramer; dimer of dimers. Requires Mg(2+) as cofactor. The cofactor is K(+).

Its subcellular location is the cytoplasm. It catalyses the reaction L-methionine + ATP + H2O = S-adenosyl-L-methionine + phosphate + diphosphate. It functions in the pathway amino-acid biosynthesis; S-adenosyl-L-methionine biosynthesis; S-adenosyl-L-methionine from L-methionine: step 1/1. In terms of biological role, catalyzes the formation of S-adenosylmethionine (AdoMet) from methionine and ATP. The overall synthetic reaction is composed of two sequential steps, AdoMet formation and the subsequent tripolyphosphate hydrolysis which occurs prior to release of AdoMet from the enzyme. The protein is S-adenosylmethionine synthase of Corynebacterium jeikeium (strain K411).